A 128-amino-acid polypeptide reads, in one-letter code: Probable 4-amino-4-deoxy-L-arabinose-phosphoundecaprenol flippase subunit ArnF (128 aa).

Topologically, residues 1–2 are cytoplasmic; sequence MG. A helical transmembrane segment spans residues 3–23; the sequence is LMWGLFSVIIASVAQLSLGFA. The Periplasmic portion of the chain corresponds to 24–35; sequence ASHLPPMTHLWD. Residues 36–56 form a helical membrane-spanning segment; the sequence is FIATLLAFGLDARILLLGLLG. The Cytoplasmic portion of the chain corresponds to 57 to 77; that stretch reads YLLSVFCWYKTLHKLALSKAY. The helical transmembrane segment at 78–98 threads the bilayer; it reads ALLSMSYVLVWIASMVLPGWG. The Periplasmic segment spans residues 99-100; that stretch reads GT. Residues 101 to 121 traverse the membrane as a helical segment; sequence FSLKALLGVACIMSGLMLIFL. Residues 122 to 128 are Cytoplasmic-facing; it reads PTTKQRY.

Belongs to the ArnF family. Heterodimer of ArnE and ArnF.

It is found in the cell inner membrane. It participates in bacterial outer membrane biogenesis; lipopolysaccharide biosynthesis. In terms of biological role, translocates 4-amino-4-deoxy-L-arabinose-phosphoundecaprenol (alpha-L-Ara4N-phosphoundecaprenol) from the cytoplasmic to the periplasmic side of the inner membrane. The sequence is that of Probable 4-amino-4-deoxy-L-arabinose-phosphoundecaprenol flippase subunit ArnF from Shigella dysenteriae serotype 1 (strain Sd197).